The sequence spans 101 residues: YcgL domain-containing protein ACIAD2309 (101 aa).

The YcgL domain occupies 1 to 93 (MHCDIYRSSK…PPEGFINPSD (93 aa)).

This Acinetobacter baylyi (strain ATCC 33305 / BD413 / ADP1) protein is YcgL domain-containing protein ACIAD2309.